A 255-amino-acid polypeptide reads, in one-letter code: Syntaxin-6 (255 aa).

Position 2 is an N-acetylserine (Ser-2). Phosphoserine is present on Ser-2. The tract at residues 2–168 (SMEDPFFVVK…QAQQQLIVEQ (167 aa)) is required for interaction with VPS51. The Cytoplasmic portion of the chain corresponds to 2-234 (SMEDPFFVVK…VSHMTSDRRQ (233 aa)). Residues 41–74 (EEIDWTTNELRNNLRSIEWDLEDLDETISIVEAN) are a coiled coil. Ser-129 and Ser-152 each carry phosphoserine. The region spanning 163-225 (QLIVEQQDEQ…DNVMKKLAKV (63 aa)) is the t-SNARE coiled-coil homology domain. Residues 235–255 (WCAIAILFAVLLVVLILFLVL) traverse the membrane as a helical; Anchor for type IV membrane protein segment.

It belongs to the syntaxin family. Identified in a complex containing STX6, STX12, VAMP4 and VTI1A. Binds EEA1. Interacts with VPS45A. Interacts with MARCHF2; the interaction promotes MARCHF2-mediated ubiquitination and degradation of CFTR. Interacts with MARCHF3. Interacts with GOPC. Interacts with BLTP3B (via C-terminal coiled-coil domain). Interacts with BAIAP3; this interaction is increased in the presence of calcium. Interacts with VPS13B.

The protein resides in the golgi apparatus membrane. Its subcellular location is the golgi apparatus. The protein localises to the trans-Golgi network membrane. It localises to the recycling endosome membrane. SNARE promoting movement of transport vesicles to target membranes. Targets endosomes to the trans-Golgi network, and may therefore function in retrograde trafficking. Together with SNARE STX12, promotes movement of vesicles from endosomes to the cell membrane, and may therefore function in the endocytic recycling pathway. The polypeptide is Syntaxin-6 (STX6) (Homo sapiens (Human)).